The chain runs to 154 residues: Probable chemoreceptor glutamine deamidase CheD (154 aa).

It belongs to the CheD family.

It carries out the reaction L-glutaminyl-[protein] + H2O = L-glutamyl-[protein] + NH4(+). Its function is as follows. Probably deamidates glutamine residues to glutamate on methyl-accepting chemotaxis receptors (MCPs), playing an important role in chemotaxis. This is Probable chemoreceptor glutamine deamidase CheD from Methanococcus vannielii (strain ATCC 35089 / DSM 1224 / JCM 13029 / OCM 148 / SB).